Consider the following 591-residue polypeptide: DDB1- and CUL4-associated factor 8 (591 aa).

A compositionally biased stretch (basic and acidic residues) spans 1 to 14 (MSSKRPSTDGRRDL). A disordered region spans residues 1 to 140 (MSSKRPSTDG…EDWVSSETTA (140 aa)). A phosphoserine mark is found at Ser21 and Ser22. The Nuclear export signal signature appears at 39–50 (IEVEASDLSLSL). Composition is skewed to basic and acidic residues over residues 65–99 (RGTDTESSGEEKDSDSMEDTGHYSINDENRVHGHS) and 118–131 (SRDQDSSDDERALE). Phosphoserine is present on residues Ser99, Ser123, and Ser124. WD repeat units lie at residues 185-224 (GHTGCVNTLHFNQRGTWLASGSDDLKVVVWDWVRRQPVLD), 228-269 (GHKS…CCKN), 275-315 (QHKG…PASK), 323-363 (EKKV…ENEN), 379-418 (ESKANITCLVYSHDGTELLASYNDEDIYLFNSSHSDGAQY), 426-466 (RNNA…IIQF), and 470-509 (DKGGVVNCLEPHPHLPVLATSGLDHDVKIWAPTAEASTEL). Arg198 bears the Omega-N-methylarginine; by PRMT1 mark. Residues 552-591 (HRRWREPGVGATDADSDESPSSSDTSDEEEGPDRVQCMPS) are disordered.

It belongs to the WD repeat DCAF8 family. In terms of assembly, interacts with DDB1, CUL4A and CUL4B. Interacts with KPNA1, KPNB1 and XPO1.

It is found in the nucleus. Its subcellular location is the cytoplasm. It functions in the pathway protein modification; protein ubiquitination. Functionally, may function as a substrate receptor for CUL4-DDB1 E3 ubiquitin-protein ligase complex. This chain is DDB1- and CUL4-associated factor 8 (Dcaf8), found in Rattus norvegicus (Rat).